A 358-amino-acid polypeptide reads, in one-letter code: Cyclin-dependent kinase 11 (358 aa).

One can recognise a Protein kinase domain in the interval 52 to 336; that stretch reads FKKLYTINEG…ASDALKHPYF (285 aa). Residues 58–66 and Lys81 contribute to the ATP site; that span reads INEGAFGVV. The active-site Proton acceptor is Asp176.

The protein belongs to the protein kinase superfamily. CMGC Ser/Thr protein kinase family. CDC2/CDKX subfamily.

The catalysed reaction is L-seryl-[protein] + ATP = O-phospho-L-seryl-[protein] + ADP + H(+). It carries out the reaction L-threonyl-[protein] + ATP = O-phospho-L-threonyl-[protein] + ADP + H(+). This Dictyostelium discoideum (Social amoeba) protein is Cyclin-dependent kinase 11 (cdk11).